The sequence spans 227 residues: Orotate phosphoribosyltransferase (227 aa).

A 5-phospho-alpha-D-ribose 1-diphosphate-binding site is contributed by lysine 26. 34 to 35 (FF) contributes to the orotate binding site. Residues 72 to 73 (YK), arginine 98, lysine 99, lysine 102, histidine 104, and 123 to 131 (DDVVSAGLS) each bind 5-phospho-alpha-D-ribose 1-diphosphate. Serine 127 and arginine 155 together coordinate orotate.

The protein belongs to the purine/pyrimidine phosphoribosyltransferase family. PyrE subfamily. As to quaternary structure, homodimer. Mg(2+) serves as cofactor.

It catalyses the reaction orotidine 5'-phosphate + diphosphate = orotate + 5-phospho-alpha-D-ribose 1-diphosphate. Its pathway is pyrimidine metabolism; UMP biosynthesis via de novo pathway; UMP from orotate: step 1/2. In terms of biological role, catalyzes the transfer of a ribosyl phosphate group from 5-phosphoribose 1-diphosphate to orotate, leading to the formation of orotidine monophosphate (OMP). This chain is Orotate phosphoribosyltransferase, found in Nitrosomonas europaea (strain ATCC 19718 / CIP 103999 / KCTC 2705 / NBRC 14298).